A 378-amino-acid chain; its full sequence is Alcohol dehydrogenase (378 aa).

Residues D195, H199, H262, and H274 each contribute to the Fe cation site.

The protein belongs to the iron-containing alcohol dehydrogenase family. Fe(2+) is required as a cofactor. Mn(2+) serves as cofactor.

It carries out the reaction a primary alcohol + NAD(+) = an aldehyde + NADH + H(+). It catalyses the reaction butan-1-ol + NAD(+) = butanal + NADH + H(+). The enzyme catalyses hexan-1-ol + NAD(+) = hexanal + NADH + H(+). The catalysed reaction is ethanol + NAD(+) = acetaldehyde + NADH + H(+). Its function is as follows. Thermostable type III alcohol dehydrogenase. For oxidation activity, the best substrates are 1-butanol and 1-hexanol, followed by ethanol. Shows lower activity with ethylene glycol, isopentanol, isopropanol and glycerol. Displays higher reduction activity in the presence of butanal, followed by acetaldehyde. Has lower activity with hexanal and acetone. The sequence is that of Alcohol dehydrogenase from Thermococcus barophilus.